The primary structure comprises 334 residues: Phosphate acyltransferase (334 aa).

Belongs to the PlsX family. As to quaternary structure, homodimer. Probably interacts with PlsY.

It is found in the cytoplasm. It carries out the reaction a fatty acyl-[ACP] + phosphate = an acyl phosphate + holo-[ACP]. It participates in lipid metabolism; phospholipid metabolism. In terms of biological role, catalyzes the reversible formation of acyl-phosphate (acyl-PO(4)) from acyl-[acyl-carrier-protein] (acyl-ACP). This enzyme utilizes acyl-ACP as fatty acyl donor, but not acyl-CoA. The polypeptide is Phosphate acyltransferase (Clostridium kluyveri (strain NBRC 12016)).